Reading from the N-terminus, the 130-residue chain is Small ribosomal subunit protein uS8 (130 aa).

The protein belongs to the universal ribosomal protein uS8 family. Part of the 30S ribosomal subunit. Contacts proteins S5 and S12.

Functionally, one of the primary rRNA binding proteins, it binds directly to 16S rRNA central domain where it helps coordinate assembly of the platform of the 30S subunit. This is Small ribosomal subunit protein uS8 from Histophilus somni (strain 129Pt) (Haemophilus somnus).